The sequence spans 274 residues: tRNA pseudouridine synthase A (274 aa).

The active-site Nucleophile is the Asp-54. Substrate is bound at residue Tyr-112.

Belongs to the tRNA pseudouridine synthase TruA family. Homodimer.

The catalysed reaction is uridine(38/39/40) in tRNA = pseudouridine(38/39/40) in tRNA. Functionally, formation of pseudouridine at positions 38, 39 and 40 in the anticodon stem and loop of transfer RNAs. The polypeptide is tRNA pseudouridine synthase A (Solidesulfovibrio magneticus (strain ATCC 700980 / DSM 13731 / RS-1) (Desulfovibrio magneticus)).